Here is a 525-residue protein sequence, read N- to C-terminus: Heat shock factor protein 1 (525 aa).

M1 carries the post-translational modification N-acetylmethionine. The DNA-binding domain stretch occupies residues V15–T120. N6-acetyllysine is present on K80. At K91 the chain carries N6-acetyllysine; alternate. A Glycyl lysine isopeptide (Lys-Gly) (interchain with G-Cter in SUMO2); alternate cross-link involves residue K91. At K118 the chain carries N6-acetyllysine. At S121 the chain carries Phosphoserine; by MAPKAPK2. A hydrophobic repeat HR-A/B region spans residues I130–L203. K131 is covalently cross-linked (Glycyl lysine isopeptide (Lys-Gly) (interchain with G-Cter in SUMO2)). T142 carries the phosphothreonine; by CK2 modification. N6-acetyllysine occurs at positions 150 and 188. Positions L203–K224 are d domain. The residue at position 208 (K208) is an N6-acetyllysine; alternate. A Glycyl lysine isopeptide (Lys-Gly) (interchain with G-Cter in SUMO2); alternate cross-link involves residue K208. The regulatory domain stretch occupies residues P221–A310. K224 is covalently cross-linked (Glycyl lysine isopeptide (Lys-Gly) (interchain with G-Cter in SUMO2)). S230 carries the phosphoserine; by CAMK2A modification. Positions S266–A365 are disordered. Low complexity predominate over residues A272 to S283. Phosphoserine is present on residues S275 and S292. Position 298 is an N6-acetyllysine; alternate (K298). Residue K298 forms a Glycyl lysine isopeptide (Lys-Gly) (interchain with G-Cter in SUMO2); alternate linkage. K298 participates in a covalent cross-link: Glycyl lysine isopeptide (Lys-Gly) (interchain with G-Cter in SUMO); alternate. Position 303 is a phosphoserine; by GSK3-beta (S303). Position 307 is a phosphoserine; by MAPK3 (S307). 2 positions are modified to phosphoserine: S314 and S319. S320 carries the phosphoserine; by PKA modification. T324 carries the phosphothreonine modification. S327 is subject to Phosphoserine; by MAPK12. Position 346 is a phosphoserine (S346). A Phosphoserine; by MAPK8 modification is found at S359. Residues E367–S525 form a transactivation domain region. The segment at L380–V405 is hydrophobic repeat HR-C. The 9aaTAD signature appears at S408–P416. Residue S415 is modified to Phosphoserine; by PLK1. Phosphoserine is present on S440. A disordered region spans residues Y495–S525. The residue at position 520 (K520) is an N6-acetyllysine.

The protein belongs to the HSF family. In terms of assembly, monomer; cytoplasmic latent and transcriptionally inactive monomeric form in unstressed cells. Homotrimer; in response to stress, such as heat shock, homotrimerizes and translocates into the nucleus, binds to heat shock element (HSE) sequences in promoter of heat shock protein (HSP) genes and acquires transcriptional ability. Interacts (via monomeric form) with FKBP4; this interaction occurs in unstressed cells. Associates (via monomeric form) with HSP90 proteins in a multichaperone complex in unnstressed cell; this association maintains HSF1 in a non-DNA-binding and transcriptional inactive form by preventing HSF1 homotrimerization. Homotrimeric transactivation activity is modulated by protein-protein interactions and post-translational modifications. Interacts with HSP90AA1; this interaction is decreased in a IER5-dependent manner, promoting HSF1 accumulation in the nucleus, homotrimerization and DNA-binding activities. Part (via regulatory domain in the homotrimeric form) of a large heat shock-induced HSP90-dependent multichaperone complex at least composed of FKBP4, FKBP5, HSP90 proteins, PPID, PPP5C and PTGES3; this association maintains the HSF1 homotrimeric DNA-bound form in a transcriptionally inactive form. Interacts with BAG3 (via BAG domain); this interaction occurs in normal and heat-shocked cells promoting nuclear shuttling of HSF1 in a BAG3-dependent manner. Interacts (via homotrimeric and hyperphosphorylated form) with FKBP4; this interaction occurs upon heat shock in a HSP90-dependent multichaperone complex. Interacts (via homotrimeric form preferentially) with EEF1A proteins. In heat shocked cells, stress-denatured proteins compete with HSF1 homotrimeric DNA-bound form for association of the HSP90-dependent multichaperone complex, and hence alleviating repression of HSF1-mediated transcriptional activity. Interacts (via homotrimeric form preferentially) with DAXX; this interaction relieves homotrimeric HSF1 from repression of its transcriptional activity by HSP90-dependent multichaperone complex upon heat shock. Interacts (via D domain and preferentially with hyperphosphorylated form) with JNK1; this interaction occurs under both normal growth conditions and immediately upon heat shock. Interacts (via D domain and preferentially with hyperphosphorylated form) with MAPK3; this interaction occurs upon heat shock. Interacts with IER5 (via central region); this interaction promotes PPP2CA-induced dephosphorylation on Ser-121, Ser-307, Ser-314 and Thr-324 and HSF1 transactivation activity. Found in a ribonucleoprotein complex composed of the HSF1 homotrimeric form, translation elongation factor eEF1A proteins and non-coding RNA heat shock RNA-1 (HSR1); this complex occurs upon heat shock and stimulates HSF1 DNA-binding activity. Interacts (via transactivation domain) with HSPA1A/HSP70 and DNAJB1; these interactions result in the inhibition of heat shock- and HSF1-induced transcriptional activity during the attenuation and recovery phase from heat shock. Interacts (via Ser-303 and Ser-307 phosphorylated form) with YWHAE; this interaction promotes HSF1 sequestration in the cytoplasm in an ERK-dependent manner. Found in a complex with IER5 and PPP2CA. Interacts with TPR; this interaction increases upon heat shock and stimulates export of HSP70 mRNA. Interacts with SYMPK (via N-terminus) and CSTF2; these interactions occur upon heat shock. Interacts (via transactivation domain) with HSPA8. Interacts with EEF1D; this interaction occurs at heat shock promoter element (HSE) sequences. Interacts with MAPKAPK2. Interacts with PRKACA/PKA. Interacts (via transactivation domain) with GTF2A2. Interacts (via transactivation domain) with GTF2B. Interacts (via transactivation domain) with TBP. Interacts with CDK9, CCNT1 and EP300. Interacts (via N-terminus) with XRCC5 (via N-terminus) and XRCC6 (via N-terminus); these interactions are direct and prevent XRCC5/XRCC6 heterodimeric binding and non-homologous end joining (NHEJ) repair activities induced by ionizing radiation (IR). Interacts with PLK1; this interaction occurs during the early mitotic period, increases upon heat shock but does not modulate neither HSF1 homotrimerization and DNA-binding activities. Interacts with CDC20; this interaction occurs in mitosis in a MAD2L1-dependent manner and prevents PLK1-stimulated degradation of HSF1 by blocking the recruitment of the SCF(BTRC) ubiquitin ligase complex. Interacts with MAD2L1; this interaction occurs in mitosis. Interacts with BTRC; this interaction occurs during mitosis, induces its ubiquitin-dependent degradation following stimulus-dependent phosphorylation, a process inhibited by CDC20. Interacts with HSP90AA1 and HSP90AB1. Forms a complex with TTC5/STRAP and p300/EP300; these interactions augment chromatin-bound HSF1 and p300/EP300 histone acetyltransferase activity. Post-translationally, phosphorylated. Phosphorylated in unstressed cells; this phosphorylation is constitutive and implicated in the repression of HSF1 transcriptional activity. Phosphorylated on Ser-121 by MAPKAPK2; this phosphorylation promotes interaction with HSP90 proteins and inhibits HSF1 homotrimerization, DNA-binding and transactivation activities. Phosphorylation on Ser-303 by GSK3B/GSK3-beta and on Ser-307 by MAPK3 within the regulatory domain is involved in the repression of HSF1 transcriptional activity and occurs in a RAF1-dependent manner. Phosphorylation on Ser-303 and Ser-307 increases HSF1 nuclear export in a YWHAE- and XPO1/CRM1-dependent manner. Phosphorylation on Ser-307 is a prerequisite for phosphorylation on Ser-303. According to, Ser-303 is not phosphorylated in unstressed cells. Phosphorylated on Ser-415 by PLK1; phosphorylation promotes nuclear translocation upon heat shock. Hyperphosphorylated upon heat shock and during the attenuation and recovery phase period of the heat shock response. Phosphorylated on Thr-142; this phosphorylation increases HSF1 transactivation activity upon heat shock. Phosphorylation on Ser-230 by CAMK2A; this phosphorylation enhances HSF1 transactivation activity upon heat shock. Phosphorylation on Ser-327 by MAPK12; this phosphorylation enhances HSF1 nuclear translocation, homotrimerization and transactivation activities upon heat shock. Phosphorylated on Ser-320 by PRKACA/PKA; this phosphorylation promotes nuclear localization and transcriptional activity upon heat shock. Phosphorylated on Ser-359 by MAPK8; this phosphorylation occurs upon heat shock, induces HSF1 translocation into nuclear stress bodies and negatively regulates transactivation activity. Neither basal nor stress-inducible phosphorylation on Ser-230, Ser-292, Ser-303, Ser-307, Ser-314, Ser-319, Ser-320, Thr-324, Ser-327, Ser-339, Ser-346, Ser-359 and Ser-364 within the regulatory domain is involved in the regulation of HSF1 subcellular localization or DNA-binding activity; however, it negatively regulates HSF1 transactivation activity. Phosphorylated by PLK1 in the early mitotic period; this phosphorylation regulates HSF1 localization to the spindle pole, the recruitment of the SCF(BTRC) ubiquitin ligase complex inducing HSF1 degradation, and hence mitotic progression. Dephosphorylated on Ser-121, Ser-307, Ser-314, Thr-324 by phosphatase PPP2CA in an IER5-dependent manner, leading to HSF1-mediated transactivation activity. In terms of processing, sumoylated with SUMO1 and SUMO2 upon heat shock in a ERK2-dependent manner. Sumoylated by SUMO1 on Lys-298; sumoylation occurs upon heat shock and promotes its localization to nuclear stress bodies and DNA-binding activity. Phosphorylation on Ser-303 and Ser-307 is probably a prerequisite for sumoylation. Acetylated on Lys-118; this acetylation is decreased in a IER5-dependent manner. Acetylated on Lys-118, Lys-208 and Lys-298; these acetylations occur in a EP300-dependent manner. Acetylated on Lys-80; this acetylation inhibits DNA-binding activity upon heat shock. Deacetylated on Lys-80 by SIRT1; this deacetylation increases DNA-binding activity. Post-translationally, ubiquitinated by SCF(BTRC) and degraded following stimulus-dependent phosphorylation by PLK1 in mitosis. Polyubiquitinated. Undergoes proteasomal degradation upon heat shock and during the attenuation and recovery phase period of the heat shock response.

Its subcellular location is the nucleus. The protein resides in the cytoplasm. It is found in the nucleoplasm. The protein localises to the perinuclear region. It localises to the cytoskeleton. Its subcellular location is the spindle pole. The protein resides in the microtubule organizing center. It is found in the centrosome. The protein localises to the chromosome. It localises to the centromere. Its subcellular location is the kinetochore. Functions as a stress-inducible and DNA-binding transcription factor that plays a central role in the transcriptional activation of the heat shock response (HSR), leading to the expression of a large class of molecular chaperones, heat shock proteins (HSPs), that protect cells from cellular insult damage. In unstressed cells, is present in a HSP90-containing multichaperone complex that maintains it in a non-DNA-binding inactivated monomeric form. Upon exposure to heat and other stress stimuli, undergoes homotrimerization and activates HSP gene transcription through binding to site-specific heat shock elements (HSEs) present in the promoter regions of HSP genes. Upon heat shock stress, forms a chromatin-associated complex with TTC5/STRAP and p300/EP300 to stimulate HSR transcription, therefore increasing cell survival. Activation is reversible, and during the attenuation and recovery phase period of the HSR, returns to its unactivated form. Binds to inverted 5'-NGAAN-3' pentamer DNA sequences. Binds to chromatin at heat shock gene promoters. Activates transcription of transcription factor FOXR1 which in turn activates transcription of the heat shock chaperones HSPA1A and HSPA6 and the antioxidant NADPH-dependent reductase DHRS2. Also serves several other functions independently of its transcriptional activity. Involved in the repression of Ras-induced transcriptional activation of the c-fos gene in heat-stressed cells. Positively regulates pre-mRNA 3'-end processing and polyadenylation of HSP70 mRNA upon heat-stressed cells in a symplekin (SYMPK)-dependent manner. Plays a role in nuclear export of stress-induced HSP70 mRNA. Plays a role in the regulation of mitotic progression. Also plays a role as a negative regulator of non-homologous end joining (NHEJ) repair activity in a DNA damage-dependent manner. Involved in stress-induced cancer cell proliferation in a IER5-dependent manner. This is Heat shock factor protein 1 from Bos taurus (Bovine).